The chain runs to 586 residues: Probable riboflavin import ATP-binding protein RfuB (586 aa).

2 consecutive ABC transporter domains span residues arginine 46 to isoleucine 299 and leucine 343 to threonine 586. Glycine 89–serine 96 is an ATP binding site.

It belongs to the ABC transporter superfamily. The complex is probably composed of two ATP-binding proteins (RfuB), two transmembrane proteins (RfuC and RfuD) and a solute-binding protein (RfuA).

The protein resides in the cell inner membrane. Its function is as follows. Probably part of the ABC transporter complex RfuABCD involved in riboflavin import. Probably responsible for energy coupling to the transport system. This is Probable riboflavin import ATP-binding protein RfuB from Treponema pallidum (strain Nichols).